Reading from the N-terminus, the 360-residue chain is Phospho-N-acetylmuramoyl-pentapeptide-transferase (360 aa).

10 helical membrane-spanning segments follow: residues 25–45 (RGILGVLTALTLSLCLGPWMI), 73–93 (TMGGALILSSIGISTLLWADL), 97–117 (YVWVVLLVTLLFGAIGWVDDY), 135–155 (FWQSVFGLCAAIFLYTTAPSA), 170–190 (IPLGIGFIVLTYFVIVGSSNA), 199–219 (GLAIMPTVMVGGALGIFCYLS), 236–256 (AGELIVFSGALIGAGLGFLWF), 263–283 (VFMGDVGALALGAALGTMAVI), 288–308 (IVLFIMGGVFVMETLSVVIQV), and 338–358 (VIVRFWIITVILVLIGLATLK).

Belongs to the glycosyltransferase 4 family. MraY subfamily. It depends on Mg(2+) as a cofactor.

The protein resides in the cell inner membrane. It carries out the reaction UDP-N-acetyl-alpha-D-muramoyl-L-alanyl-gamma-D-glutamyl-meso-2,6-diaminopimeloyl-D-alanyl-D-alanine + di-trans,octa-cis-undecaprenyl phosphate = di-trans,octa-cis-undecaprenyl diphospho-N-acetyl-alpha-D-muramoyl-L-alanyl-D-glutamyl-meso-2,6-diaminopimeloyl-D-alanyl-D-alanine + UMP. The protein operates within cell wall biogenesis; peptidoglycan biosynthesis. Its function is as follows. Catalyzes the initial step of the lipid cycle reactions in the biosynthesis of the cell wall peptidoglycan: transfers peptidoglycan precursor phospho-MurNAc-pentapeptide from UDP-MurNAc-pentapeptide onto the lipid carrier undecaprenyl phosphate, yielding undecaprenyl-pyrophosphoryl-MurNAc-pentapeptide, known as lipid I. The protein is Phospho-N-acetylmuramoyl-pentapeptide-transferase of Pseudomonas savastanoi pv. phaseolicola (strain 1448A / Race 6) (Pseudomonas syringae pv. phaseolicola (strain 1448A / Race 6)).